A 141-amino-acid chain; its full sequence is Large ribosomal subunit protein uL16 (141 aa).

The protein belongs to the universal ribosomal protein uL16 family. In terms of assembly, part of the 50S ribosomal subunit.

Functionally, binds 23S rRNA and is also seen to make contacts with the A and possibly P site tRNAs. This is Large ribosomal subunit protein uL16 from Microchaete diplosiphon (Fremyella diplosiphon).